The chain runs to 491 residues: Cobyric acid synthase (491 aa).

The GATase cobBQ-type domain maps to 258–445 (ALKVAVPVLG…MHGLFGADAF (188 aa)). The active-site Nucleophile is Cys340. Residue His437 is part of the active site.

The protein belongs to the CobB/CobQ family. CobQ subfamily.

Its pathway is cofactor biosynthesis; adenosylcobalamin biosynthesis. In terms of biological role, catalyzes amidations at positions B, D, E, and G on adenosylcobyrinic A,C-diamide. NH(2) groups are provided by glutamine, and one molecule of ATP is hydrogenolyzed for each amidation. This Mesorhizobium japonicum (strain LMG 29417 / CECT 9101 / MAFF 303099) (Mesorhizobium loti (strain MAFF 303099)) protein is Cobyric acid synthase.